The chain runs to 121 residues: Protein 3.8 (121 aa).

This is Protein 3.8 from Escherichia phage T7 (Bacteriophage T7).